Consider the following 382-residue polypeptide: 2-heptyl-3-hydroxy-4(1H)-quinolone synthase (382 aa).

Belongs to the 3-hydroxybenzoate 6-hydroxylase family.

It carries out the reaction 2-heptyl-4(1H)-quinolone + NADH + O2 + H(+) = 2-heptyl-3-hydroxy-4(1H)-quinolone + NAD(+) + H2O. Its function is as follows. Involved in the terminal step of the biosynthesis of quinolone which in addition to serve as a potent signal for quorum sensing, chelates iron and promotes the formation of membrane vesicles (MVs). Catalyzes the hydroxylation of 2-heptyl-4-quinolone (C7-HHQ) to yield 2-heptyl-3-hydroxy-4-quinolone (PQS). This chain is 2-heptyl-3-hydroxy-4(1H)-quinolone synthase (pqsH), found in Pseudomonas aeruginosa (strain ATCC 15692 / DSM 22644 / CIP 104116 / JCM 14847 / LMG 12228 / 1C / PRS 101 / PAO1).